The primary structure comprises 201 residues: NADH-quinone oxidoreductase subunit B 1 (201 aa).

Positions 80, 81, 145, and 175 each coordinate [4Fe-4S] cluster.

It belongs to the complex I 20 kDa subunit family. As to quaternary structure, NDH-1 is composed of 14 different subunits. Subunits NuoB, C, D, E, F, and G constitute the peripheral sector of the complex. [4Fe-4S] cluster is required as a cofactor.

Its subcellular location is the cell inner membrane. It carries out the reaction a quinone + NADH + 5 H(+)(in) = a quinol + NAD(+) + 4 H(+)(out). NDH-1 shuttles electrons from NADH, via FMN and iron-sulfur (Fe-S) centers, to quinones in the respiratory chain. The immediate electron acceptor for the enzyme in this species is believed to be ubiquinone. Couples the redox reaction to proton translocation (for every two electrons transferred, four hydrogen ions are translocated across the cytoplasmic membrane), and thus conserves the redox energy in a proton gradient. This is NADH-quinone oxidoreductase subunit B 1 from Rhodopseudomonas palustris (strain BisB18).